The following is a 371-amino-acid chain: MSMSPKHTTPFSVSDILSPLEESYKKVGMEGGGLGAPLAAYRQGQAAPPAAAMQQHAVGHHGAVTAAYHMTAAGVPQLSHSAVGGYCNGNLGNMSELPPYQDTMRNSASGPGWYGANPDPRFPAISRFMGPASGMNMSGMGGLGSLGDVSKNMAPLPSAPRRKRRVLFSQAQVYELERRFKQQKYLSAPEREHLASMIHLTPTQVKIWFQNHRYKMKRQAKDKAAQQQLQQDSGGGGGGGGAGCPQQQQAQQQSPRRVAVPVLVKDGKPCQAGAPAPGAGSLQGHAQQQAQQQAQAAQAAAAAISVGSGGPGLGAHPGHQPGSAGQSPDLAHHAASPAALQGQVSSLSHLNSSGSDYGTMSCSTLLYGRTW.

Positions 161 to 220 form a DNA-binding region, homeobox; that stretch reads RRKRRVLFSQAQVYELERRFKQQKYLSAPEREHLASMIHLTPTQVKIWFQNHRYKMKRQA. Disordered stretches follow at residues 219–294 and 308–342; these read QAKD…QQQA and SGGPGLGAHPGHQPGSAGQSPDLAHHAASPAALQG. The segment covering 233–243 has biased composition (gly residues); it reads SGGGGGGGGAG. Low complexity-rich tracts occupy residues 244-253 and 272-294; these read CPQQQQAQQQ and AGAPAPGAGSLQGHAQQQAQQQA.

It belongs to the NK-2 homeobox family. In terms of processing, phosphorylated on serine residues. As to expression, thyroid, lung and CNS.

Its subcellular location is the nucleus. Transcription factor that binds and activates the promoter of thyroid specific genes such as thyroglobulin, thyroperoxidase, and thyrotropin receptor. Crucial in the maintenance of the thyroid differentiation phenotype. May play a role in lung development and surfactant homeostasis. This is Thyroid transcription factor 1 (TITF1) from Canis lupus familiaris (Dog).